We begin with the raw amino-acid sequence, 644 residues long: MRLSELTHPNQLHGLSIAELEDVARQIRERHLEVVSTSGGHLGPGLGVVELTLALYQTLDLDHDRVVWDVGHQAYPHKLITGRYGDFNTLRQQGGVAGYLKRCESSFDHFGAGHASTSISAALGMAVARERRGESFKCVAVIGDGALTGGIALEAINHAGHMPNTPFLVVLNDNDMSISPPVGALSTHLNRMRHSAPVQFISDSVEERVKSLPFMGGELPAELDLLKGSMRRLSVPKVGAVFEELGFTYMGPIDGHDIERMVRTFETAHKVGGPVLVHVVTTKGKGYPYAEADQVGYHAQSAFDLITGKALPSKGKKPPSYSKVFGETLIKLCQQDSTVVGITAAMATGTGLDLLQKAVPEQYIDVGIAEQHAVTLAAGMACEGLKPVLAIYSTFLQRAFDQLIHDVGIQNLPVTFVMDRAGIVGADGPTHQGQYDISYFRAIPNFTVMAPKDEAELQRMLVTCLQHQGPAALRIPRGSGEGVPLLDEGWEPLAIGRGEVLCEGDDLLIVAYGVMVPAAMITAQLLQEAGVKATVINARFLRPLDQALIHPLARRIGRVVTMEEGALAGGFGAAVVESLSDQDVLVPTFRIGIPDQLVDHASPQQSREALGLTPTQMSERIQEHFCLNSQPSLVGQEAPQALST.

Residues histidine 72 and 113-115 (GHA) each bind thiamine diphosphate. Mg(2+) is bound at residue aspartate 144. Residues 145–146 (GA), asparagine 174, tyrosine 287, and glutamate 370 contribute to the thiamine diphosphate site. Mg(2+) is bound at residue asparagine 174.

This sequence belongs to the transketolase family. DXPS subfamily. As to quaternary structure, homodimer. Mg(2+) serves as cofactor. Requires thiamine diphosphate as cofactor.

The enzyme catalyses D-glyceraldehyde 3-phosphate + pyruvate + H(+) = 1-deoxy-D-xylulose 5-phosphate + CO2. It functions in the pathway metabolic intermediate biosynthesis; 1-deoxy-D-xylulose 5-phosphate biosynthesis; 1-deoxy-D-xylulose 5-phosphate from D-glyceraldehyde 3-phosphate and pyruvate: step 1/1. Catalyzes the acyloin condensation reaction between C atoms 2 and 3 of pyruvate and glyceraldehyde 3-phosphate to yield 1-deoxy-D-xylulose-5-phosphate (DXP). This Prochlorococcus marinus (strain MIT 9303) protein is 1-deoxy-D-xylulose-5-phosphate synthase.